The following is a 548-amino-acid chain: mRNA cleavage and polyadenylation factor CLP1 (548 aa).

Residues E19, K60, and 123 to 128 (SSGKTT) each bind ATP. The span at 437–481 (ESEVKEEVKEEKNEKDGEIKQDGEGEKKGEGKGEGEGEGEGKYGE) shows a compositional bias: basic and acidic residues. The interval 437–500 (ESEVKEEVKE…DEEEVPFREE (64 aa)) is disordered. Acidic residues predominate over residues 482-494 (EEGEAEGEDDEEE).

It belongs to the Clp1 family. Clp1 subfamily. Component of a pre-mRNA cleavage factor complex. Interacts directly with PCF11.

The protein resides in the nucleus. Functionally, required for endonucleolytic cleavage during polyadenylation-dependent pre-mRNA 3'-end formation. The polypeptide is mRNA cleavage and polyadenylation factor CLP1 (Cryptococcus neoformans var. neoformans serotype D (strain B-3501A) (Filobasidiella neoformans)).